Here is a 300-residue protein sequence, read N- to C-terminus: Aspartate carbamoyltransferase catalytic subunit (300 aa).

Residues Arg54 and Thr55 each contribute to the carbamoyl phosphate site. L-aspartate is bound at residue Lys82. The carbamoyl phosphate site is built by Arg104, His131, and Gln134. L-aspartate contacts are provided by Arg164 and Arg213. Residues Ala256 and Pro257 each coordinate carbamoyl phosphate.

The protein belongs to the aspartate/ornithine carbamoyltransferase superfamily. ATCase family. In terms of assembly, heterododecamer (2C3:3R2) of six catalytic PyrB chains organized as two trimers (C3), and six regulatory PyrI chains organized as three dimers (R2).

The catalysed reaction is carbamoyl phosphate + L-aspartate = N-carbamoyl-L-aspartate + phosphate + H(+). It functions in the pathway pyrimidine metabolism; UMP biosynthesis via de novo pathway; (S)-dihydroorotate from bicarbonate: step 2/3. Functionally, catalyzes the condensation of carbamoyl phosphate and aspartate to form carbamoyl aspartate and inorganic phosphate, the committed step in the de novo pyrimidine nucleotide biosynthesis pathway. This is Aspartate carbamoyltransferase catalytic subunit from Malacoplasma penetrans (strain HF-2) (Mycoplasma penetrans).